The primary structure comprises 586 residues: uncharacterized protein (586 aa).

2 coiled-coil regions span residues 183–293 and 331–400; these read THTE…ELEN and FKDK…DKKN.

This is an uncharacterized protein from Bacillus subtilis (strain 168).